The chain runs to 513 residues: 2-isopropylmalate synthase (513 aa).

The Pyruvate carboxyltransferase domain occupies 5-268; it reads LIIFDTTLRD…EVGIDTTQIV (264 aa). Mn(2+) is bound by residues Asp-14, His-202, His-204, and Asn-239. The segment at 394-513 is regulatory domain; it reads RLLSLEQQSA…SKNERVAAQG (120 aa).

The protein belongs to the alpha-IPM synthase/homocitrate synthase family. LeuA type 1 subfamily. As to quaternary structure, homodimer. The cofactor is Mn(2+).

The protein resides in the cytoplasm. It catalyses the reaction 3-methyl-2-oxobutanoate + acetyl-CoA + H2O = (2S)-2-isopropylmalate + CoA + H(+). Its pathway is amino-acid biosynthesis; L-leucine biosynthesis; L-leucine from 3-methyl-2-oxobutanoate: step 1/4. Catalyzes the condensation of the acetyl group of acetyl-CoA with 3-methyl-2-oxobutanoate (2-ketoisovalerate) to form 3-carboxy-3-hydroxy-4-methylpentanoate (2-isopropylmalate). The polypeptide is 2-isopropylmalate synthase (Methylibium petroleiphilum (strain ATCC BAA-1232 / LMG 22953 / PM1)).